The following is a 444-amino-acid chain: Probable D-serine dehydratase (444 aa).

N6-(pyridoxal phosphate)lysine is present on Lys-118.

It belongs to the serine/threonine dehydratase family. DsdA subfamily. Requires pyridoxal 5'-phosphate as cofactor.

It carries out the reaction D-serine = pyruvate + NH4(+). This is Probable D-serine dehydratase from Acinetobacter baumannii (strain ACICU).